A 103-amino-acid polypeptide reads, in one-letter code: Co-chaperonin GroES (103 aa).

It belongs to the GroES chaperonin family. Heptamer of 7 subunits arranged in a ring. Interacts with the chaperonin GroEL.

The protein resides in the cytoplasm. Its function is as follows. Together with the chaperonin GroEL, plays an essential role in assisting protein folding. The GroEL-GroES system forms a nano-cage that allows encapsulation of the non-native substrate proteins and provides a physical environment optimized to promote and accelerate protein folding. GroES binds to the apical surface of the GroEL ring, thereby capping the opening of the GroEL channel. The polypeptide is Co-chaperonin GroES (Synechococcus sp. (strain JA-3-3Ab) (Cyanobacteria bacterium Yellowstone A-Prime)).